The following is a 143-amino-acid chain: Interleukin-3 (143 aa).

Positions 1–23 (MSSFPILHLLLLLLGCQVPQAQG) are cleaved as a signal peptide. N79 carries N-linked (GlcNAc...) asparagine glycosylation.

This sequence belongs to the IL-3 family. Monomer.

Its subcellular location is the secreted. Granulocyte/macrophage colony-stimulating factors are cytokines that act in hematopoiesis by controlling the production, differentiation, and function of 2 related white cell populations of the blood, the granulocytes and the monocytes-macrophages. In terms of biological role, this CSF induces granulocytes, macrophages, mast cells, stem cells, erythroid cells, eosinophils and megakaryocytes. The sequence is that of Interleukin-3 (IL3) from Canis lupus familiaris (Dog).